A 209-amino-acid chain; its full sequence is Probable calcium-binding protein CML36 (209 aa).

A disordered region spans residues 22-59 (SKSPTAFSFGSASSSSGQDCKNSGGDGGGGSVTPTSIL). Residues 27–38 (AFSFGSASSSSG) show a composition bias toward low complexity. EF-hand domains follow at residues 66–101 (YSYV…LGPD), 103–138 (LTEE…LDPA), 139–174 (RDST…IGDE), and 176–209 (CTLD…DLQR). 4 residues coordinate Ca(2+): Asp-79, Asp-81, Asp-83, and Asp-90. Residues Asp-152, Asp-154, Asp-156, Glu-163, Asp-189, Asp-191, Asp-193, and Glu-200 each contribute to the Ca(2+) site.

Functionally, potential calcium sensor. The sequence is that of Probable calcium-binding protein CML36 (CML36) from Arabidopsis thaliana (Mouse-ear cress).